We begin with the raw amino-acid sequence, 143 residues long: ATP synthase subunit b' (143 aa).

The helical transmembrane segment at Ala-6–Phe-26 threads the bilayer.

It belongs to the ATPase B chain family. As to quaternary structure, F-type ATPases have 2 components, F(1) - the catalytic core - and F(0) - the membrane proton channel. F(1) has five subunits: alpha(3), beta(3), gamma(1), delta(1), epsilon(1). F(0) has four main subunits: a(1), b(1), b'(1) and c(10-14). The alpha and beta chains form an alternating ring which encloses part of the gamma chain. F(1) is attached to F(0) by a central stalk formed by the gamma and epsilon chains, while a peripheral stalk is formed by the delta, b and b' chains.

Its subcellular location is the cellular thylakoid membrane. In terms of biological role, f(1)F(0) ATP synthase produces ATP from ADP in the presence of a proton or sodium gradient. F-type ATPases consist of two structural domains, F(1) containing the extramembraneous catalytic core and F(0) containing the membrane proton channel, linked together by a central stalk and a peripheral stalk. During catalysis, ATP synthesis in the catalytic domain of F(1) is coupled via a rotary mechanism of the central stalk subunits to proton translocation. Component of the F(0) channel, it forms part of the peripheral stalk, linking F(1) to F(0). The b'-subunit is a diverged and duplicated form of b found in plants and photosynthetic bacteria. This chain is ATP synthase subunit b', found in Crocosphaera subtropica (strain ATCC 51142 / BH68) (Cyanothece sp. (strain ATCC 51142)).